The primary structure comprises 426 residues: Serine hydroxymethyltransferase (426 aa).

(6S)-5,6,7,8-tetrahydrofolate is bound by residues Leu118 and 122–124; that span reads GHL. Lys227 carries the post-translational modification N6-(pyridoxal phosphate)lysine.

The protein belongs to the SHMT family. In terms of assembly, homodimer. Requires pyridoxal 5'-phosphate as cofactor.

Its subcellular location is the cytoplasm. The catalysed reaction is (6R)-5,10-methylene-5,6,7,8-tetrahydrofolate + glycine + H2O = (6S)-5,6,7,8-tetrahydrofolate + L-serine. It participates in one-carbon metabolism; tetrahydrofolate interconversion. The protein operates within amino-acid biosynthesis; glycine biosynthesis; glycine from L-serine: step 1/1. Functionally, catalyzes the reversible interconversion of serine and glycine with tetrahydrofolate (THF) serving as the one-carbon carrier. This reaction serves as the major source of one-carbon groups required for the biosynthesis of purines, thymidylate, methionine, and other important biomolecules. Also exhibits THF-independent aldolase activity toward beta-hydroxyamino acids, producing glycine and aldehydes, via a retro-aldol mechanism. This Mycobacterium leprae (strain Br4923) protein is Serine hydroxymethyltransferase.